Reading from the N-terminus, the 442-residue chain is 3-isopropylmalate dehydratase large subunit (442 aa).

[4Fe-4S] cluster-binding residues include Cys347, Cys407, and Cys410.

The protein belongs to the aconitase/IPM isomerase family. LeuC type 1 subfamily. As to quaternary structure, heterodimer of LeuC and LeuD. It depends on [4Fe-4S] cluster as a cofactor.

It catalyses the reaction (2R,3S)-3-isopropylmalate = (2S)-2-isopropylmalate. The protein operates within amino-acid biosynthesis; L-leucine biosynthesis; L-leucine from 3-methyl-2-oxobutanoate: step 2/4. Functionally, catalyzes the isomerization between 2-isopropylmalate and 3-isopropylmalate, via the formation of 2-isopropylmaleate. The chain is 3-isopropylmalate dehydratase large subunit from Buchnera aphidicola subsp. Uroleucon helianthicola.